Here is a 209-residue protein sequence, read N- to C-terminus: Large ribosomal subunit protein uL3 (209 aa).

Positions 128 to 152 are disordered; that stretch reads QARGPMSHGSRYHRRPGSMGPVDPN.

The protein belongs to the universal ribosomal protein uL3 family. In terms of assembly, part of the 50S ribosomal subunit. Forms a cluster with proteins L14 and L19.

Functionally, one of the primary rRNA binding proteins, it binds directly near the 3'-end of the 23S rRNA, where it nucleates assembly of the 50S subunit. The sequence is that of Large ribosomal subunit protein uL3 from Halalkalibacterium halodurans (strain ATCC BAA-125 / DSM 18197 / FERM 7344 / JCM 9153 / C-125) (Bacillus halodurans).